Consider the following 659-residue polypeptide: Pentatricopeptide repeat-containing protein At3g48810 (659 aa).

16 PPR repeats span residues 75-109 (TPLTFEVMIRKLAMDGQVDSVQYLLQQMKLQGFHC), 110-144 (SEDLFISVISVYRQVGLAERAVEMFYRIKEFGCDP), 145-179 (SVKIYNHVLDTLLGENRIQMIYMVYRDMKRDGFEP), 180-214 (NVFTYNVLLKALCKNNKVDGAKKLLVEMSNKGCCP), 215-243 (DAVSYTTVISSMCEVGLVKEGRELAERFE), 245-279 (VVSVYNALINGLCKEHDYKGAFELMREMVEKGISP), 280-314 (NVISYSTLINVLCNSGQIELAFSFLTQMLKRGCHP), 315-350 (NIYTLSSLVKGCFLRGTTFDALDLWNQMIRGFGLQP), 351-385 (NVVAYNTLVQGFCSHGNIVKAVSVFSHMEEIGCSP), 386-420 (NIRTYGSLINGFAKRGSLDGAVYIWNKMLTSGCCP), 421-455 (NVVVYTNMVEALCRHSKFKEAESLIEIMSKENCAP), 456-490 (SVPTFNAFIKGLCDAGRLDWAEKVFRQMEQQHRCP), 492-526 (NIVTYNELLDGLAKANRIEEAYGLTREIFMRGVEW), 527-561 (SSSTYNTLLHGSCNAGLPGIALQLVGKMMVDGKSP), 562-598 (DEITMNMIILAYCKQGKAERAAQMLDLVSCGRRKWRP), and 599-633 (DVISYTNVIWGLCRSNCREDGVILLERMISAGIVP).

This sequence belongs to the PPR family. P subfamily.

The protein is Pentatricopeptide repeat-containing protein At3g48810 of Arabidopsis thaliana (Mouse-ear cress).